The following is a 5162-amino-acid chain: Linear gramicidin synthase subunit B (5162 aa).

Carrier domains are found at residues 963 to 1038, 2027 to 2101, 3541 to 3616, and 4601 to 4675; these read APRN…QALR, EPQS…VVLE, APRN…GAIG, and AATS…GQST. Ser-998, Ser-2062, Ser-3576, and Ser-4636 each carry O-(pantetheine 4'-phosphoryl)serine.

Belongs to the ATP-dependent AMP-binding enzyme family. In terms of assembly, large multienzyme complex composed of 4 subunits; LgrA, LgrB, LgrC and LgrD. The cofactor is pantetheine 4'-phosphate.

Its function is as follows. Activates the 3rd to 6th amino acids (Ala, D-Leu, Ala and D-Val) in linear gramicidin and catalyzes the formation of the peptide bond between them. This enzyme is also responsible for the epimerization of the 4th (D-Leu) and the 6th (D-Val) amino acids. The protein is Linear gramicidin synthase subunit B (lgrB) of Brevibacillus parabrevis.